The following is a 334-amino-acid chain: Small ribosomal subunit protein uS2 (334 aa).

It belongs to the universal ribosomal protein uS2 family.

In Rhodopseudomonas palustris (strain BisB18), this protein is Small ribosomal subunit protein uS2.